A 195-amino-acid chain; its full sequence is Imidazoleglycerol-phosphate dehydratase (195 aa).

It belongs to the imidazoleglycerol-phosphate dehydratase family.

The protein localises to the cytoplasm. It carries out the reaction D-erythro-1-(imidazol-4-yl)glycerol 3-phosphate = 3-(imidazol-4-yl)-2-oxopropyl phosphate + H2O. It functions in the pathway amino-acid biosynthesis; L-histidine biosynthesis; L-histidine from 5-phospho-alpha-D-ribose 1-diphosphate: step 6/9. In Pelotomaculum thermopropionicum (strain DSM 13744 / JCM 10971 / SI), this protein is Imidazoleglycerol-phosphate dehydratase.